Consider the following 1172-residue polypeptide: Laminin subunit beta-3 (1172 aa).

Positions 1-17 are cleaved as a signal peptide; the sequence is MRPFFLLCFALPGLLHA. One can recognise a Laminin N-terminal domain in the interval 22–249; it reads SRGACYPPVG…AVSQLRLQGS (228 aa). N-linked (GlcNAc...) asparagine glycosylation occurs at Asn220. Cystine bridges form between Cys250-Cys259, Cys252-Cys279, Cys281-Cys290, Cys293-Cys313, Cys316-Cys325, Cys318-Cys343, Cys346-Cys355, Cys358-Cys376, Cys379-Cys392, Cys381-Cys399, Cys401-Cys410, Cys413-Cys428, Cys431-Cys444, Cys433-Cys451, Cys453-Cys462, Cys465-Cys478, Cys481-Cys493, Cys483-Cys500, Cys502-Cys511, Cys519-Cys531, Cys534-Cys546, Cys536-Cys553, Cys555-Cys564, and Cys567-Cys578. Laminin EGF-like domains are found at residues 250-315, 316-378, 379-430, 431-480, 481-533, and 534-580; these read CFCH…ECQR, CDCN…TCIS, CECD…GCHR, CDCN…GCEP, CACD…GCRA, and CDCD…VCVA. A domain II region spans residues 579 to 785; sequence VACHPCFQTY…SLPDLTPTFN (207 aa). An N-linked (GlcNAc...) asparagine glycan is attached at Asn604. A coiled-coil region spans residues 723–757; the sequence is EQSAQAAQQVSDSSRLLDQLRDSRREAERLVRQAG. The tract at residues 786–816 is domain alpha; sequence KLCGNSRQMACTPISCPGELCPQDNGTACGS. Asn810 carries an N-linked (GlcNAc...) asparagine glycan. The tract at residues 817–1170 is domain I; it reads RCRGVLPRAG…INGRVLYYAT (354 aa). Coiled coils occupy residues 831-884 and 948-1133; these read MAGQ…MEED and VLSQ…ELEL.

In terms of assembly, laminin is a complex glycoprotein, consisting of three different polypeptide chains (alpha, beta, gamma), which are bound to each other by disulfide bonds into a cross-shaped molecule comprising one long and three short arms with globules at each end. Beta-3 is a subunit of laminin-5 (laminin-332 or epiligrin/kalinin/nicein). Interacts with ECM1. Found in the basement membranes (major component).

The protein resides in the secreted. It localises to the extracellular space. The protein localises to the extracellular matrix. Its subcellular location is the basement membrane. In terms of biological role, binding to cells via a high affinity receptor, laminin is thought to mediate the attachment, migration and organization of cells into tissues during embryonic development by interacting with other extracellular matrix components. The chain is Laminin subunit beta-3 (LAMB3) from Homo sapiens (Human).